The primary structure comprises 274 residues: Aliphatic sulfonates import ATP-binding protein SsuB 2 (274 aa).

The ABC transporter domain maps to 21–235 (VQLRNVVRQF…DSGQAGFQLI (215 aa)). 53–60 (GASGSGKT) provides a ligand contact to ATP.

Belongs to the ABC transporter superfamily. Aliphatic sulfonates importer (TC 3.A.1.17.2) family. In terms of assembly, the complex is composed of two ATP-binding proteins (SsuB), two transmembrane proteins (SsuC) and a solute-binding protein (SsuA).

It localises to the cell inner membrane. The catalysed reaction is ATP + H2O + aliphatic sulfonate-[sulfonate-binding protein]Side 1 = ADP + phosphate + aliphatic sulfonateSide 2 + [sulfonate-binding protein]Side 1.. Functionally, part of the ABC transporter complex SsuABC involved in aliphatic sulfonates import. Responsible for energy coupling to the transport system. The chain is Aliphatic sulfonates import ATP-binding protein SsuB 2 from Pseudomonas syringae pv. syringae (strain B728a).